The chain runs to 135 residues: Basic phospholipase A2 10 (135 aa).

Cystine bridges form between Cys-28/Cys-87, Cys-42/Cys-134, Cys-44/Cys-60, Cys-59/Cys-115, Cys-66/Cys-108, Cys-76/Cys-101, and Cys-94/Cys-106. Ca(2+)-binding residues include Tyr-43, Gly-45, and Gly-47. His-63 is an active-site residue. Ca(2+) is bound at residue Asp-64. Asp-109 is a catalytic residue.

The protein belongs to the phospholipase A2 family. Group I subfamily. D49 sub-subfamily. Requires Ca(2+) as cofactor. As to expression, expressed by the venom gland.

It is found in the secreted. It carries out the reaction a 1,2-diacyl-sn-glycero-3-phosphocholine + H2O = a 1-acyl-sn-glycero-3-phosphocholine + a fatty acid + H(+). Functionally, snake venom phospholipase A2 (PLA2) that inhibits neuromuscular transmission by blocking acetylcholine release from the nerve termini. PLA2 catalyzes the calcium-dependent hydrolysis of the 2-acyl groups in 3-sn-phosphoglycerides. This chain is Basic phospholipase A2 10, found in Bungarus fasciatus (Banded krait).